The chain runs to 81 residues: Small ribosomal subunit protein bS18 (81 aa).

It belongs to the bacterial ribosomal protein bS18 family. Part of the 30S ribosomal subunit. Forms a tight heterodimer with protein bS6.

Functionally, binds as a heterodimer with protein bS6 to the central domain of the 16S rRNA, where it helps stabilize the platform of the 30S subunit. This Parvibaculum lavamentivorans (strain DS-1 / DSM 13023 / NCIMB 13966) protein is Small ribosomal subunit protein bS18.